A 454-amino-acid polypeptide reads, in one-letter code: Replicative DNA helicase DnaC (454 aa).

The SF4 helicase domain maps to 179-445; the sequence is RKGDITGIPT…NKFVNLERRF (267 aa). Residue 210–217 coordinates ATP; sequence ARPSVGKT.

This sequence belongs to the helicase family. DnaB subfamily. In terms of assembly, the DNA replisome assembles sequentially on oriC in this order; DnaA, DnaD, DnaB, DnaI-DnaC helicase. Monomer in the absence of ATP, in its presence forms a probable homohexamer which is not active as a helicase in vitro. Interacts separately and simultaneously with helicase loaders DnaB and DnaI. Interaction with DnaB does not require ATP. Interaction with DnaI requires ATP, probably forms a DnaC(6):DnaI(6) complex, which is not active as a helicase.

It localises to the cytoplasm. The protein resides in the nucleoid. It catalyses the reaction Couples ATP hydrolysis with the unwinding of duplex DNA at the replication fork by translocating in the 5'-3' direction. This creates two antiparallel DNA single strands (ssDNA). The leading ssDNA polymer is the template for DNA polymerase III holoenzyme which synthesizes a continuous strand.. The enzyme catalyses ATP + H2O = ADP + phosphate + H(+). The main replicative DNA helicase, it participates in initiation and elongation during chromosome replication. Travels ahead of the DNA replisome, separating dsDNA into templates for DNA synthesis. The monomer has helicase activity in the presence of DnaI which is further increased by DnaB; the purified oligomeric form (probably a DnaC hexamer) does not have helicase activity in vitro, nor does the DnaC(6):DnaI(6) complex. The direction was not determined but is probably 5'-3'. Helicase activity requires an rNTP and is inactive with dNTPs. Has weak ATPase activity as a monomer, as an oligomer has ATPase activity which is stimulated by single-stranded (ss)DNA and further stimulated by DnaI and more by DnaB. Functionally, deletion of a single T residue in the promoter region (a run of 8 Ts becomes 7 Ts) decreases the helicase levels by 50%, decreasing DNA replication inititation during fast growth in rich medium. Suppresses the synthetic lethality of a dnaA1-yabA deletion for growth on rich medium. In Bacillus subtilis (strain 168), this protein is Replicative DNA helicase DnaC.